Here is a 268-residue protein sequence, read N- to C-terminus: Tryptophan synthase alpha chain (268 aa).

Active-site proton acceptor residues include E49 and D60.

The protein belongs to the TrpA family. As to quaternary structure, tetramer of two alpha and two beta chains.

The enzyme catalyses (1S,2R)-1-C-(indol-3-yl)glycerol 3-phosphate + L-serine = D-glyceraldehyde 3-phosphate + L-tryptophan + H2O. Its pathway is amino-acid biosynthesis; L-tryptophan biosynthesis; L-tryptophan from chorismate: step 5/5. Functionally, the alpha subunit is responsible for the aldol cleavage of indoleglycerol phosphate to indole and glyceraldehyde 3-phosphate. This chain is Tryptophan synthase alpha chain, found in Escherichia coli O1:K1 / APEC.